The sequence spans 100 residues: UPF0213 protein YhbQ (100 aa).

One can recognise a GIY-YIG domain in the interval 2–77 (TPWFLYLIRT…KQLTKRQKER (76 aa)).

This sequence belongs to the UPF0213 family.

This chain is UPF0213 protein YhbQ, found in Escherichia coli O127:H6 (strain E2348/69 / EPEC).